Consider the following 138-residue polypeptide: Large ribosomal subunit protein uL16 (138 aa).

The protein belongs to the universal ribosomal protein uL16 family. As to quaternary structure, part of the 50S ribosomal subunit.

In terms of biological role, binds 23S rRNA and is also seen to make contacts with the A and possibly P site tRNAs. The sequence is that of Large ribosomal subunit protein uL16 from Ureaplasma parvum serovar 3 (strain ATCC 27815 / 27 / NCTC 11736).